The following is a 321-amino-acid chain: Cytochrome f (321 aa).

A signal peptide spans 1–38 (MINLFLLKYKTAFSTFLKPFAYLSLILSVCFYSIQAQA). 4 residues coordinate heme: phenylalanine 39, cysteine 59, cysteine 62, and histidine 63. Residues 287-306 (VKGLIAFFFTVILAQILLVL) form a helical membrane-spanning segment.

The protein belongs to the cytochrome f family. As to quaternary structure, the 4 large subunits of the cytochrome b6-f complex are cytochrome b6, subunit IV (17 kDa polypeptide, petD), cytochrome f and the Rieske protein, while the 4 small subunits are PetG, PetL, PetM and PetN. The complex functions as a dimer. It depends on heme as a cofactor.

It localises to the plastid. The protein resides in the chloroplast thylakoid membrane. In terms of biological role, component of the cytochrome b6-f complex, which mediates electron transfer between photosystem II (PSII) and photosystem I (PSI), cyclic electron flow around PSI, and state transitions. This chain is Cytochrome f (petA), found in Guillardia theta (Cryptophyte).